The chain runs to 194 residues: Lymphocyte antigen 6 complex locus protein G5b (194 aa).

A signal peptide spans 1-18 (MRACVLVHVLTMVGFALG). In terms of domain architecture, UPAR/Ly6 spans 26-118 (RTCHLCFLED…SAQHQSTLPG (93 aa)). 5 cysteine pairs are disulfide-bonded: Cys-28-Cys-55, Cys-31-Cys-40, Cys-47-Cys-73, Cys-81-Cys-98, and Cys-99-Cys-104. The N-linked (GlcNAc...) asparagine glycan is linked to Asn-182.

Post-translationally, N-glycosylated.

Its subcellular location is the secreted. This Rattus norvegicus (Rat) protein is Lymphocyte antigen 6 complex locus protein G5b (Ly6g5b).